A 732-amino-acid polypeptide reads, in one-letter code: Protein kinase YpkA (732 aa).

Residues Val136–Leu408 enclose the Protein kinase domain. Residues Phe142–Ser150 and Lys163 each bind ATP. Asp270 serves as the catalytic Proton acceptor.

Belongs to the protein kinase superfamily. Ser/Thr protein kinase family.

Its subcellular location is the secreted. The catalysed reaction is L-seryl-[protein] + ATP = O-phospho-L-seryl-[protein] + ADP + H(+). The enzyme catalyses L-threonyl-[protein] + ATP = O-phospho-L-threonyl-[protein] + ADP + H(+). Acts as a virulence determinant. The polypeptide is Protein kinase YpkA (ypkA) (Yersinia pseudotuberculosis serotype I (strain IP32953)).